The sequence spans 145 residues: Large ribosomal subunit protein bL9 (145 aa).

The protein belongs to the bacterial ribosomal protein bL9 family.

In terms of biological role, binds to the 23S rRNA. The protein is Large ribosomal subunit protein bL9 of Mesomycoplasma hyopneumoniae (strain 7448) (Mycoplasma hyopneumoniae).